Consider the following 233-residue polypeptide: Small ribosomal subunit protein uS2 (233 aa).

It belongs to the universal ribosomal protein uS2 family.

The protein is Small ribosomal subunit protein uS2 of Bacillus mycoides (strain KBAB4) (Bacillus weihenstephanensis).